Consider the following 400-residue polypeptide: Nucleoside permease NupC (400 aa).

Topologically, residues 1–3 (MDR) are cytoplasmic. The helical transmembrane segment at 4 to 24 (VLHFVLALAVVAILALLVSSD) threads the bilayer. Over 25-36 (RKKIRIRYVIQL) the chain is Periplasmic. A helical membrane pass occupies residues 37 to 57 (LVIEVLLAWFFLNSDVGLGFV). Residues 58 to 86 (KGFSEMFEKLLGFANEGTNFVFGSMNDQG) lie on the Cytoplasmic side of the membrane. A helical transmembrane segment spans residues 87–107 (LAFFFLKVLCPIVFISALIGI). Residues 108-168 (LQHIRVLPVI…GKISRNRMYT (61 aa)) are Periplasmic-facing. A helical membrane pass occupies residues 169–189 (MAATAMSTVSMSIVGAYMTML). Residues 190 to 192 (EPK) are Cytoplasmic-facing. The helical transmembrane segment at 193–213 (YVVAALVLNMFSTFIVLSLIN) threads the bilayer. Residues 214 to 250 (PYRVDASEENIQMSNLHEGQSFFEMLGEYILAGFKVA) are Periplasmic-facing. Residues 251-271 (IIVAAMLIGFIALIAALNALF) traverse the membrane as a helical segment. Over 272–281 (ATVTGWFGYS) the chain is Cytoplasmic. Residues 282–302 (ISFQGILGYIFYPIAWVMGVP) traverse the membrane as a helical segment. Residues 303-341 (SSEALQVGSIMATKLVSNEFVAMMDLQKIASTLSPRAEG) are Periplasmic-facing. A helical transmembrane segment spans residues 342–362 (IISVFLVSFANFSSIGIIAGA). Residues 363–378 (VKGLNEEQGNVVSRFG) are Cytoplasmic-facing. Residues 379–399 (LKLVYGSTLVSVLSASIAALV) form a helical membrane-spanning segment. Leucine 400 is a topological domain (periplasmic).

The protein belongs to the concentrative nucleoside transporter (CNT) (TC 2.A.41) family.

It localises to the cell inner membrane. It carries out the reaction adenosine(in) + H(+)(in) = adenosine(out) + H(+)(out). The catalysed reaction is uridine(in) + H(+)(in) = uridine(out) + H(+)(out). The enzyme catalyses thymidine(in) + H(+)(in) = thymidine(out) + H(+)(out). It catalyses the reaction cytidine(in) + H(+)(in) = cytidine(out) + H(+)(out). It carries out the reaction 2'-deoxycytidine(in) + H(+)(in) = 2'-deoxycytidine(out) + H(+)(out). Its activity is regulated as follows. Transport is inhibited by the proton uncoupler dinitrophenol. Inhibited by the nucleoside antibiotic showdomycin. Its function is as follows. Nucleoside transport protein that can transport adenosine, uridine, thymidine, cytidine and deoxycytidine. Shows weak activity with inosine and xanthosine. Transport is driven by a proton motive force. Does not transport guanosine, deoxyguanosine, hypoxanthine or uracil. Also shows activity with the chemotherapeutic drugs 3'-azido-3'-deoxythymidine (AZT), 2',3'- dideoxycytidine (ddC) and 2'-deoxy-2',2'-difluorocytidine (gemcitabine). In Escherichia coli (strain K12), this protein is Nucleoside permease NupC.